Consider the following 325-residue polypeptide: Bifunctional ligase/repressor BirA (325 aa).

A DNA-binding region (H-T-H motif) is located at residues 23–42 (GQKISDALGCSRTAVWKHIE). Residues 74-262 (RFGLKTEVMG…CFEKRYRDYM (189 aa)) enclose the BPL/LPL catalytic domain. Biotin contacts are provided by residues Gln118, 122–124 (RGR), and Lys189.

Belongs to the biotin--protein ligase family.

The enzyme catalyses biotin + L-lysyl-[protein] + ATP = N(6)-biotinyl-L-lysyl-[protein] + AMP + diphosphate + H(+). Acts both as a biotin--[acetyl-CoA-carboxylase] ligase and a repressor. This Bacillus spizizenii (strain ATCC 23059 / NRRL B-14472 / W23) (Bacillus subtilis subsp. spizizenii) protein is Bifunctional ligase/repressor BirA.